Consider the following 65-residue polypeptide: Antimicrobial peptide THP1 (65 aa).

Residues 1–25 (MRIVYLLFPFILLLAQGAAGSSLAL) form the signal peptide. Cystine bridges form between Cys31–Cys53, Cys38–Cys59, and Cys43–Cys60. Positions 61 to 65 (KTLLG) are excised as a propeptide.

The protein belongs to the beta-defensin family.

Its subcellular location is the secreted. Bactericidal activity; inhibits S.aureus and E.coli. The polypeptide is Antimicrobial peptide THP1 (Meleagris gallopavo (Wild turkey)).